Reading from the N-terminus, the 551-residue chain is Peptidyl-prolyl cis-trans isomerase-like 4 (551 aa).

The PPIase cyclophilin-type domain maps to M1 to V185. The interval G54–S88 is disordered. A compositionally biased stretch (polar residues) spans I66 to S88. The RRM domain maps to N262–S340. The disordered stretch occupies residues R352–R551. 2 stretches are compositionally biased toward basic and acidic residues: residues K384 to P397 and S408 to D454. A compositionally biased stretch (basic residues) spans H455–V464. Residues R465–R551 show a composition bias toward basic and acidic residues.

It belongs to the cyclophilin-type PPIase family. PPIL4 subfamily.

The protein resides in the nucleus. It carries out the reaction [protein]-peptidylproline (omega=180) = [protein]-peptidylproline (omega=0). Functionally, PPIases accelerate the folding of proteins. It catalyzes the cis-trans isomerization of proline imidic peptide bonds in oligopeptides. This Mycosarcoma maydis (Corn smut fungus) protein is Peptidyl-prolyl cis-trans isomerase-like 4 (CYP6).